The chain runs to 426 residues: MTLWVLGLNHQTAPVDLRERAAFAGDALPRALESLRALPQVSEAALLSTCNRTELYAMAEEAHSLVNWLETHAPGLSGYLYQHQEAEAVRHLFRVATGLDSMVLGEPQILGQVKDAWAVARAHGALGSGLDRLFQQTFSVAKRARTDTRVGANPVSVASTAVRLAQDSFARLNESTVLLIGAGETIELAAKHLSEGRVRRLLIANRTLAHAQTLASQHGGFALPLTDLERHLAEADVVFSATAAREPLVTRVQVEQALRARKRKPMLLFDLAVPRDIEASVGELSDAYLYTVDDLERAVEDNRRGRREAADQAEAIIDLQVARYVETLQATAHQAPLKRLRAFGDSTRDELLAKARQQLHNGKPADEVLEQLAHALTNRLLHPPTAALRDAALNNDLELTAAADRLFPEKPGYQHPPHSYPDREDR.

Substrate-binding positions include 49–52, Ser-101, 106–108, and Gln-112; these read TCNR and EPQ. Cys-50 acts as the Nucleophile in catalysis. 181–186 serves as a coordination point for NADP(+); that stretch reads GAGETI. The interval 405–426 is disordered; the sequence is RLFPEKPGYQHPPHSYPDREDR.

This sequence belongs to the glutamyl-tRNA reductase family. Homodimer.

The catalysed reaction is (S)-4-amino-5-oxopentanoate + tRNA(Glu) + NADP(+) = L-glutamyl-tRNA(Glu) + NADPH + H(+). It participates in porphyrin-containing compound metabolism; protoporphyrin-IX biosynthesis; 5-aminolevulinate from L-glutamyl-tRNA(Glu): step 1/2. Catalyzes the NADPH-dependent reduction of glutamyl-tRNA(Glu) to glutamate 1-semialdehyde (GSA). The polypeptide is Glutamyl-tRNA reductase (Xanthomonas axonopodis pv. citri (strain 306)).